The primary structure comprises 438 residues: Anaerobic glycerol-3-phosphate dehydrogenase subunit B (438 aa).

It belongs to the anaerobic G-3-P dehydrogenase subunit B family. Composed of a catalytic GlpA/B dimer and of membrane bound GlpC. It depends on FMN as a cofactor.

The enzyme catalyses a quinone + sn-glycerol 3-phosphate = dihydroxyacetone phosphate + a quinol. It participates in polyol metabolism; glycerol degradation via glycerol kinase pathway; glycerone phosphate from sn-glycerol 3-phosphate (anaerobic route): step 1/1. Functionally, conversion of glycerol 3-phosphate to dihydroxyacetone. Uses fumarate or nitrate as electron acceptor. In Vibrio vulnificus (strain CMCP6), this protein is Anaerobic glycerol-3-phosphate dehydrogenase subunit B.